Reading from the N-terminus, the 429-residue chain is MRLPIRAVTPETESAEIVGWVHEVRDLGGLSFFLIRDRTGIIQVTIPKKKVPAEILDTARSVSRESVVRVRGTVKAIEKAPGGREIVPEELEIISTAESPLPLDVAEKVSAEMDTRLDSRFLDARKPRVRAIFFIRSAVTCAATAFLASRGCINIATPKIVAAATEGGTELFPIAYFEKEAFMNQSPQLYKQMMMAAGFEAVFEIGPIFRAEEHNTVRHLNEATSLDVEVSFADHNDVMELLEDLIVHVYDHVAKDCSEHLAELEIDLKVPSKPFPRIPYAEAIEIANKTIEEKLAFGDDLSPAAERAIGDTVGQHYFIVDWPTDIRPYYAMPYPDRPEFCKAFDLMHPRMELSSGAQRIHDHDLLVERISAKGLSPESFEFYLKPFRYGMPPHAGWGLGIERLVMTMLDLPNIREAVLFPRDRHRLMP.

E166 contacts L-aspartate. Residues Q188–K191 are aspartate. R210 serves as a coordination point for L-aspartate. ATP-binding positions include R210–E212, R218–L220, and E352. The Mg(2+) site is built by E352 and S355. Residues S355 and R359 each coordinate L-aspartate. G400–R403 contacts ATP.

It belongs to the class-II aminoacyl-tRNA synthetase family. Type 2 subfamily. Homodimer. It depends on Mg(2+) as a cofactor.

Its subcellular location is the cytoplasm. The enzyme catalyses tRNA(Asx) + L-aspartate + ATP = L-aspartyl-tRNA(Asx) + AMP + diphosphate. Aspartyl-tRNA synthetase with relaxed tRNA specificity since it is able to aspartylate not only its cognate tRNA(Asp) but also tRNA(Asn). Reaction proceeds in two steps: L-aspartate is first activated by ATP to form Asp-AMP and then transferred to the acceptor end of tRNA(Asp/Asn). The polypeptide is Aspartate--tRNA(Asp/Asn) ligase (Methanoculleus marisnigri (strain ATCC 35101 / DSM 1498 / JR1)).